A 340-amino-acid chain; its full sequence is Protein jhp_1168 (340 aa).

In terms of assembly, seems to interact with H.pylori HolB.

In terms of biological role, could be the functional equivalent of DNA polymerase III delta subunit (HolA). The polypeptide is Protein jhp_1168 (Helicobacter pylori (strain J99 / ATCC 700824) (Campylobacter pylori J99)).